The following is a 205-amino-acid chain: LexA repressor (205 aa).

The H-T-H motif DNA-binding region spans 28 to 48 (RAEIATRLGFKSANAAEEHLK). Catalysis depends on for autocatalytic cleavage activity residues S122 and K159.

This sequence belongs to the peptidase S24 family. In terms of assembly, homodimer.

It carries out the reaction Hydrolysis of Ala-|-Gly bond in repressor LexA.. Its function is as follows. Represses a number of genes involved in the response to DNA damage (SOS response), including recA and lexA. In the presence of single-stranded DNA, RecA interacts with LexA causing an autocatalytic cleavage which disrupts the DNA-binding part of LexA, leading to derepression of the SOS regulon and eventually DNA repair. The chain is LexA repressor from Shewanella denitrificans (strain OS217 / ATCC BAA-1090 / DSM 15013).